The following is a 499-amino-acid chain: ADP,ATP carrier protein 5 (499 aa).

A run of 11 helical transmembrane segments spans residues 25 to 45 (LGKF…QNIL), 61 to 81 (IAGF…VIIY), 93 to 113 (IFYY…FVIY), 148 to 168 (YIVY…LLFW), 183 to 203 (FYTF…FLMM), 223 to 243 (ITLV…CCVL), 286 to 306 (LWLL…VEAV), 327 to 347 (LYIL…NNVM), 356 to 376 (AVIS…LIVF), 380 to 400 (ILSL…VSIG), and 468 to 488 (SISP…IYAV).

This sequence belongs to the ADP/ATP translocase tlc family.

Its subcellular location is the cell membrane. In terms of biological role, provides the rickettsial cell with host ATP in exchange for rickettsial ADP. This is an obligate exchange system. This energy acquiring activity is an important component of rickettsial parasitism. The chain is ADP,ATP carrier protein 5 (tlcE) from Rickettsia felis (strain ATCC VR-1525 / URRWXCal2) (Rickettsia azadi).